Here is a 713-residue protein sequence, read N- to C-terminus: Glycine--tRNA ligase beta subunit (713 aa).

The protein belongs to the class-II aminoacyl-tRNA synthetase family. As to quaternary structure, tetramer of two alpha and two beta subunits.

Its subcellular location is the cytoplasm. It catalyses the reaction tRNA(Gly) + glycine + ATP = glycyl-tRNA(Gly) + AMP + diphosphate. The chain is Glycine--tRNA ligase beta subunit from Picosynechococcus sp. (strain ATCC 27264 / PCC 7002 / PR-6) (Agmenellum quadruplicatum).